A 39-amino-acid polypeptide reads, in one-letter code: LVSVEHQAARLKVAKAQQLAAQLPAMCRLEGGDALSASQ.

Belongs to the gliadin/glutenin family. Disulfide-bridge linked aggregates.

Glutenins are high-molecular weight seed storage proteins of wheat endosperm. Thought to be responsible for the visco-elastic property of wheat dough. The protein is Glutenin, high molecular weight subunit PC237 of Triticum aestivum (Wheat).